A 205-amino-acid polypeptide reads, in one-letter code: Putative 3-methyladenine DNA glycosylase (205 aa).

It belongs to the DNA glycosylase MPG family.

The protein is Putative 3-methyladenine DNA glycosylase of Bacillus cereus (strain G9842).